A 578-amino-acid chain; its full sequence is Phosphoenolpyruvate-protein phosphotransferase (578 aa).

Residue histidine 195 is the Tele-phosphohistidine intermediate of the active site. Residues arginine 302 and arginine 338 each contribute to the phosphoenolpyruvate site. Glutamate 437 and aspartate 461 together coordinate Mg(2+). Residues 460–461 and arginine 471 contribute to the phosphoenolpyruvate site; that span reads ND. Cysteine 508 acts as the Proton donor in catalysis.

Belongs to the PEP-utilizing enzyme family. In terms of assembly, homodimer. It depends on Mg(2+) as a cofactor.

It is found in the cytoplasm. It carries out the reaction L-histidyl-[protein] + phosphoenolpyruvate = N(pros)-phospho-L-histidyl-[protein] + pyruvate. Functionally, general (non sugar-specific) component of the phosphoenolpyruvate-dependent sugar phosphotransferase system (sugar PTS). This major carbohydrate active-transport system catalyzes the phosphorylation of incoming sugar substrates concomitantly with their translocation across the cell membrane. Enzyme I transfers the phosphoryl group from phosphoenolpyruvate (PEP) to the phosphoryl carrier protein (HPr). The protein is Phosphoenolpyruvate-protein phosphotransferase (ptsI) of Bacillus sp. (strain S).